The sequence spans 109 residues: Aquaporin-2 (109 aa).

Residues 1-6 (SVAFSR) lie on the Cytoplasmic side of the membrane. Residues 7–27 (AVLAEFLATLIFVFFGLGSAL) traverse the membrane as a helical segment. Residues 28-35 (SWPQALPS) lie on the Extracellular side of the membrane. A helical membrane pass occupies residues 36-54 (VLQIALAFGLAIGTLVQAL). Topologically, residues 55–59 (GHVSG) are cytoplasmic. Residues 60–69 (AHINPAVTVA) constitute an intramembrane region (discontinuously helical). The short motif at 63–65 (NPA) is the NPA 1 element. The Cytoplasmic portion of the chain corresponds to 70–80 (CLVGCHVSFLR). A helical membrane pass occupies residues 81-102 (AAFYVAAQLLGAVAGAAILHEI). Residues 103–109 (TPPDVRG) lie on the Extracellular side of the membrane.

This sequence belongs to the MIP/aquaporin (TC 1.A.8) family. As to quaternary structure, homotetramer. In terms of processing, serine phosphorylation is necessary and sufficient for expression at the apical membrane. Endocytosis is not phosphorylation-dependent. Post-translationally, N-glycosylated.

It localises to the apical cell membrane. It is found in the basolateral cell membrane. The protein localises to the cell membrane. Its subcellular location is the cytoplasmic vesicle membrane. The protein resides in the golgi apparatus. It localises to the trans-Golgi network membrane. It catalyses the reaction H2O(in) = H2O(out). The enzyme catalyses glycerol(in) = glycerol(out). Its function is as follows. Forms a water-specific channel that provides the plasma membranes of renal collecting duct with high permeability to water, thereby permitting water to move in the direction of an osmotic gradient. Plays an essential role in renal water homeostasis. Could also be permeable to glycerol. This chain is Aquaporin-2, found in Dasypus novemcinctus (Nine-banded armadillo).